A 383-amino-acid chain; its full sequence is Probable arabinan endo-1,5-alpha-L-arabinosidase D (383 aa).

Positions 1 to 22 (MVHITLPGLLLCLCLYLSVAPA) are cleaved as a signal peptide. Asp-49 serves as the catalytic Proton acceptor. N-linked (GlcNAc...) asparagine glycans are attached at residues Asn-75, Asn-163, and Asn-206. Glu-227 serves as the catalytic Proton donor. Residue Asn-325 is glycosylated (N-linked (GlcNAc...) asparagine). Asn-356 carries the GPI-anchor amidated asparagine lipid modification. A propeptide spans 357-383 (PGNSLQPPSSVSLQIVAFLCLVILFTL) (removed in mature form).

The protein belongs to the glycosyl hydrolase 43 family.

The protein resides in the cell membrane. The enzyme catalyses Endohydrolysis of (1-&gt;5)-alpha-arabinofuranosidic linkages in (1-&gt;5)-arabinans.. The protein operates within glycan metabolism; L-arabinan degradation. Endo-1,5-alpha-L-arabinanase involved in degradation of pectin. Its preferred substrate is linear 1,5-alpha-L-arabinan. The protein is Probable arabinan endo-1,5-alpha-L-arabinosidase D (abnD) of Emericella nidulans (strain FGSC A4 / ATCC 38163 / CBS 112.46 / NRRL 194 / M139) (Aspergillus nidulans).